Here is a 169-residue protein sequence, read N- to C-terminus: Ribosome maturation factor RimM (169 aa).

A PRC barrel domain is found at 96–166 (EDEFYFADLI…AVVVRPVEVE (71 aa)).

It belongs to the RimM family. In terms of assembly, binds ribosomal protein uS19.

The protein localises to the cytoplasm. Its function is as follows. An accessory protein needed during the final step in the assembly of 30S ribosomal subunit, possibly for assembly of the head region. Essential for efficient processing of 16S rRNA. May be needed both before and after RbfA during the maturation of 16S rRNA. It has affinity for free ribosomal 30S subunits but not for 70S ribosomes. This is Ribosome maturation factor RimM from Acidiphilium cryptum (strain JF-5).